The chain runs to 95 residues: Aspartyl/glutamyl-tRNA(Asn/Gln) amidotransferase subunit C (95 aa).

Belongs to the GatC family. In terms of assembly, heterotrimer of A, B and C subunits.

The enzyme catalyses L-glutamyl-tRNA(Gln) + L-glutamine + ATP + H2O = L-glutaminyl-tRNA(Gln) + L-glutamate + ADP + phosphate + H(+). It carries out the reaction L-aspartyl-tRNA(Asn) + L-glutamine + ATP + H2O = L-asparaginyl-tRNA(Asn) + L-glutamate + ADP + phosphate + 2 H(+). Functionally, allows the formation of correctly charged Asn-tRNA(Asn) or Gln-tRNA(Gln) through the transamidation of misacylated Asp-tRNA(Asn) or Glu-tRNA(Gln) in organisms which lack either or both of asparaginyl-tRNA or glutaminyl-tRNA synthetases. The reaction takes place in the presence of glutamine and ATP through an activated phospho-Asp-tRNA(Asn) or phospho-Glu-tRNA(Gln). The protein is Aspartyl/glutamyl-tRNA(Asn/Gln) amidotransferase subunit C of Nitratidesulfovibrio vulgaris (strain DSM 19637 / Miyazaki F) (Desulfovibrio vulgaris).